We begin with the raw amino-acid sequence, 82 residues long: Small ribosomal subunit protein uS17 (82 aa).

The protein belongs to the universal ribosomal protein uS17 family. Part of the 30S ribosomal subunit.

Functionally, one of the primary rRNA binding proteins, it binds specifically to the 5'-end of 16S ribosomal RNA. This Xanthobacter autotrophicus (strain ATCC BAA-1158 / Py2) protein is Small ribosomal subunit protein uS17.